Consider the following 238-residue polypeptide: MKVSLFATCLIDLFYTNAGKATVELLERLGCEIDFPEAQTCCGQPAYNSGYVKEAKEAMKHMIRTFEHADYVVTPSGSCATMLKEYPRVFQGDREWESKAKALADKTYELTQFIVDVLKMEDVGAKLQGRATYHTSCHMTRLLGVKEAPFKLLKNVKGLELVPLPNAYQCCGFGGTFSVKMGTISEQMVDEKIEHIEEVNADYLIGADCGCLMNIGGRLKRQGKPIKVMHIAEVLNSR.

The protein belongs to the LutA/YkgE family.

Is involved in L-lactate degradation and allows cells to grow with lactate as the sole carbon source. This is Lactate utilization protein A from Geobacillus sp. (strain WCH70).